The sequence spans 245 residues: Probable phosphatase YcdX (245 aa).

His7, His9, His15, His40, Glu73, His101, His131, Asp192, and His194 together coordinate Zn(2+).

The protein belongs to the PHP family. Homotrimer. Requires Zn(2+) as cofactor.

This Salmonella heidelberg (strain SL476) protein is Probable phosphatase YcdX.